Consider the following 930-residue polypeptide: Short transient receptor potential channel 6 (930 aa).

Positions Met-1–Glu-27 are disordered. The Cytoplasmic segment spans residues Met-1 to Gly-437. 4 ANK repeats span residues Ile-96 to Val-125, Met-131 to Val-160, Asp-162 to Gly-188, and His-217 to Arg-246. Residues Pro-438–Met-458 form a helical membrane-spanning segment. The Extracellular segment spans residues Asn-459–Lys-486. A helical membrane pass occupies residues Thr-487–Ala-507. Over Glu-508–Tyr-520 the chain is Cytoplasmic. A helical transmembrane segment spans residues Leu-521–Ile-541. The Extracellular segment spans residues Ala-542–Gln-591. Residue Asn-560 is glycosylated (N-linked (GlcNAc...) asparagine). A helical membrane pass occupies residues Ile-592–Ile-612. Residues Leu-613 to Lys-635 lie on the Cytoplasmic side of the membrane. Residues Phe-636–Ser-656 traverse the membrane as a helical segment. The Extracellular segment spans residues Tyr-657–Val-705. Residues Leu-706 to Ile-726 form a helical membrane-spanning segment. Over Asn-727–Arg-930 the chain is Cytoplasmic. At Ser-814 the chain carries Phosphoserine.

Belongs to the transient receptor (TC 1.A.4) family. STrpC subfamily. TRPC6 sub-subfamily. In terms of assembly, homodimer; forms channel complex. Interacts with MX1 and RNF24. Phosphorylated by FYN, leading to an increase of TRPC6 channel activity. In terms of processing, N-glycosylated. Lung and brain.

Its subcellular location is the cell membrane. It catalyses the reaction Ca(2+)(in) = Ca(2+)(out). Its function is as follows. Forms a receptor-activated non-selective calcium permeant cation channel. Probably is operated by a phosphatidylinositol second messenger system activated by receptor tyrosine kinases or G-protein coupled receptors. Activated by diacylglycerol (DAG) in a membrane-delimited fashion, independently of protein kinase C. Seems not to be activated by intracellular calcium store depletion. In Mus musculus (Mouse), this protein is Short transient receptor potential channel 6.